The sequence spans 157 residues: Type II restriction enzyme PvuII (157 aa).

The Mg(2+) site is built by Asp-58 and Glu-68.

Homodimer. It depends on Mg(2+) as a cofactor.

It catalyses the reaction Endonucleolytic cleavage of DNA to give specific double-stranded fragments with terminal 5'-phosphates.. In terms of biological role, a P subtype restriction enzyme that recognizes the double-stranded sequence 5'-CAGCTG-3' and cleaves after G-3. The protein is Type II restriction enzyme PvuII (pvuIIR) of Proteus hauseri.